The following is a 300-amino-acid chain: uncharacterized protein (300 aa).

An N-terminal signal peptide occupies residues 1–22 (MKSFVWTLLGALSLGSLTTAYG).

The protein resides in the endoplasmic reticulum. This is an uncharacterized protein from Schizosaccharomyces pombe (strain 972 / ATCC 24843) (Fission yeast).